Reading from the N-terminus, the 127-residue chain is Large-conductance mechanosensitive channel (127 aa).

Helical transmembrane passes span Glu9–Phe29, Ile32–Val52, and Val75–Leu95.

The protein belongs to the MscL family. In terms of assembly, homopentamer.

The protein resides in the cell inner membrane. Functionally, channel that opens in response to stretch forces in the membrane lipid bilayer. May participate in the regulation of osmotic pressure changes within the cell. The sequence is that of Large-conductance mechanosensitive channel from Legionella pneumophila (strain Lens).